A 1123-amino-acid polypeptide reads, in one-letter code: RNA-binding protein 6 (1123 aa).

Disordered regions lie at residues 1 to 391 and 413 to 454; these read MWGD…EGGL and LPGS…EEKP. Ser-17 carries the post-translational modification Phosphoserine. A Glycyl lysine isopeptide (Lys-Gly) (interchain with G-Cter in SUMO2) cross-link involves residue Lys-36. Over residues 79–97 the composition is skewed to basic and acidic residues; sequence DGPHGDYRGGEGPGHDFRG. A compositionally biased stretch (low complexity) spans 98–114; it reads GDFSSSDFQSRDSSQLD. Basic and acidic residues-rich tracts occupy residues 115–131 and 145–237; these read FRGR…REGP and YRGR…DFRG. Ser-240 is modified (phosphoserine). Composition is skewed to basic and acidic residues over residues 245–286 and 301–323; these read LDFR…REMP and QDRE…HTIE. Lys-331 is covalently cross-linked (Glycyl lysine isopeptide (Lys-Gly) (interchain with G-Cter in SUMO2)). The segment covering 332–354 has biased composition (basic and acidic residues); the sequence is GEFEHSETREGETQGVAFEHESP. A Phosphothreonine modification is found at Thr-344. Residues 356–365 are compositionally biased toward polar residues; the sequence is DFQNSQSPVQ. A phosphoserine mark is found at Ser-360 and Ser-362. 2 stretches are compositionally biased toward basic and acidic residues: residues 366–391 and 431–454; these read DQDK…EGGL and KTAR…EEKP. Residues Lys-386, Lys-453, Lys-469, and Lys-569 each participate in a glycyl lysine isopeptide (Lys-Gly) (interchain with G-Cter in SUMO2) cross-link. Positions 456 to 536 constitute an RRM domain; the sequence is RLIRLSGVPE…KEVTLEYVSS (81 aa). 3 disordered regions span residues 574-654, 741-787, and 827-948; these read TYPQ…QDGE, KRRN…QSSS, and EEEI…EEDK. Composition is skewed to basic and acidic residues over residues 597–654 and 742–754; these read PADK…QDGE and RRND…DHMH. Positions 772–787 are enriched in polar residues; the sequence is SDWSSDTNRQGQQSSS. Residues 843-860 show a composition bias toward basic and acidic residues; sequence SKKEMSKRDGKEKKDRGV. Residues Lys-871, Lys-879, and Lys-887 each participate in a glycyl lysine isopeptide (Lys-Gly) (interchain with G-Cter in SUMO2) cross-link. Position 891 is a phosphoserine (Ser-891). A compositionally biased stretch (acidic residues) spans 910 to 922; it reads GDSDYEEEEEEEQ. Over residues 934–948 the composition is skewed to basic and acidic residues; it reads QKREEQTKKENEEDK. Glycyl lysine isopeptide (Lys-Gly) (interchain with G-Cter in SUMO2) cross-links involve residues Lys-935, Lys-948, Lys-991, and Lys-1019. Residues 1004–1051 show a composition bias toward basic and acidic residues; that stretch reads EREGKFKGRGNDRREKLQSFDSPERKRIKYSRETDSDRKLVDKEDIDT. The interval 1004 to 1106 is disordered; the sequence is EREGKFKGRG…RTSKRQSNET (103 aa). A phosphoserine mark is found at Ser-1022 and Ser-1025. Residues Lys-1042, Lys-1046, and Lys-1066 each participate in a glycyl lysine isopeptide (Lys-Gly) (interchain with G-Cter in SUMO2) cross-link. One can recognise a G-patch domain in the interval 1051–1097; that stretch reads TSSKGGCVQQATGWRKGTGLGYGHPGLASSEEAEGRMRGPSVGASGR.

As to quaternary structure, may interact with FAM168B. As to expression, ubiquitous in adults.

It localises to the nucleus. In terms of biological role, specifically binds poly(G) RNA homopolymers in vitro. The sequence is that of RNA-binding protein 6 (RBM6) from Homo sapiens (Human).